A 792-amino-acid polypeptide reads, in one-letter code: Phenylalanine--tRNA ligase beta subunit (792 aa).

Residues 39–147 (GEALDLIVVA…DDAPIGTPLA (109 aa)) form the tRNA-binding domain. One can recognise a B5 domain in the interval 400–475 (PAPASILLRR…RIRGYEHLPT (76 aa)). Asp453, Asp459, Glu462, and Glu463 together coordinate Mg(2+). The FDX-ACB domain occupies 698 to 791 (SRFPFVRRDL…IQQRHDVRIR (94 aa)).

This sequence belongs to the phenylalanyl-tRNA synthetase beta subunit family. Type 1 subfamily. Tetramer of two alpha and two beta subunits. The cofactor is Mg(2+).

It is found in the cytoplasm. The catalysed reaction is tRNA(Phe) + L-phenylalanine + ATP = L-phenylalanyl-tRNA(Phe) + AMP + diphosphate + H(+). This is Phenylalanine--tRNA ligase beta subunit (pheT) from Xylella fastidiosa (strain 9a5c).